A 96-amino-acid polypeptide reads, in one-letter code: Pterin-4-alpha-carbinolamine dehydratase (96 aa).

The protein belongs to the pterin-4-alpha-carbinolamine dehydratase family.

It is found in the spore wall. It catalyses the reaction (4aS,6R)-4a-hydroxy-L-erythro-5,6,7,8-tetrahydrobiopterin = (6R)-L-erythro-6,7-dihydrobiopterin + H2O. In terms of biological role, has a role in spore wall formation. The polypeptide is Pterin-4-alpha-carbinolamine dehydratase (omt2) (Schizosaccharomyces pombe (strain 972 / ATCC 24843) (Fission yeast)).